Here is a 325-residue protein sequence, read N- to C-terminus: Probable cell division protein WhiA (325 aa).

The segment at residues 273–306 is a DNA-binding region (H-T-H motif); it reads SLEELGALADPPLTKDAVAGRIRRLLALADKRAN.

Belongs to the WhiA family.

Involved in cell division and chromosome segregation. The polypeptide is Probable cell division protein WhiA (Frankia casuarinae (strain DSM 45818 / CECT 9043 / HFP020203 / CcI3)).